Reading from the N-terminus, the 377-residue chain is MLKRASFVEVNTASLRHNFSAVKSIVPKDAHIMAVVKANAYGAGAIKASEIFLQEGANYLGVAALDEALELRSHFPKTPILILGYSPNANASMLIDNDLSAMVFSLEQAEVFSQMALKSQKRLKVHLKIDTGMHRLGLEPNFKSIETIKKIRALKGLEVEGIFTHLSNADAKIKTHAKNQMKAFNAFLEQLLDQKIEFQYRHAYNSAGILSLCNGNENRFLNLYRPGIMLYGFYPSNEMKESCPTILKNVISLKAQIVQIRSVKKGEFIGYGEHFYTNEETLVGVLALGYADGLMRALGNRIQVAINNQLAPLIGKVCMDQCFVKLNNIQAKEGDEVILFGDKSAKANDASEIAALLNTIPYETISTLSKRLERVYI.

The active-site Proton acceptor; specific for D-alanine is Lys-37. Lys-37 is modified (N6-(pyridoxal phosphate)lysine). Arg-135 is a substrate binding site. Residue Tyr-271 is the Proton acceptor; specific for L-alanine of the active site. Met-319 is a binding site for substrate.

The protein belongs to the alanine racemase family. Pyridoxal 5'-phosphate is required as a cofactor.

It carries out the reaction L-alanine = D-alanine. It participates in amino-acid biosynthesis; D-alanine biosynthesis; D-alanine from L-alanine: step 1/1. Its function is as follows. Catalyzes the interconversion of L-alanine and D-alanine. May also act on other amino acids. This chain is Alanine racemase (alr), found in Helicobacter pylori (strain P12).